Consider the following 475-residue polypeptide: Putative response regulator NtrX-like (475 aa).

Residues 5–121 (DVLIVDDEES…KLVILLKRAC (117 aa)) form the Response regulatory domain. 4-aspartylphosphate is present on D54. A Sigma-54 factor interaction domain is found at 143–369 (LVGGCSVTLK…LRNVVEWTLI (227 aa)). Residues 171-178 (GKVGSGKE) and 232-241 (ANNGTLYIDE) each bind ATP.

In terms of biological role, member of the two-component regulatory system RF_0895/RF_0427. In Rickettsia felis (strain ATCC VR-1525 / URRWXCal2) (Rickettsia azadi), this protein is Putative response regulator NtrX-like.